Consider the following 486-residue polypeptide: Cardiolipin synthase A (486 aa).

Helical transmembrane passes span Thr-3–Val-23 and Met-38–Phe-58. 2 consecutive PLD phosphodiesterase domains span residues Met-219 to Arg-246 and Glu-399 to Ser-426. Residues His-224, Lys-226, Asp-231, His-404, Lys-406, and Asp-411 contribute to the active site.

Belongs to the phospholipase D family. Cardiolipin synthase subfamily. ClsA sub-subfamily.

It is found in the cell inner membrane. It carries out the reaction 2 a 1,2-diacyl-sn-glycero-3-phospho-(1'-sn-glycerol) = a cardiolipin + glycerol. Catalyzes the reversible phosphatidyl group transfer from one phosphatidylglycerol molecule to another to form cardiolipin (CL) (diphosphatidylglycerol) and glycerol. The sequence is that of Cardiolipin synthase A from Yersinia pseudotuberculosis serotype O:3 (strain YPIII).